An 842-amino-acid polypeptide reads, in one-letter code: Protein P (842 aa).

The tract at residues 1–177 is terminal protein domain (TP); that stretch reads MPLSYQHFRR…FCGSPYSWEQ (177 aa). The spacer stretch occupies residues 178–345; that stretch reads ELHHGAFLDG…YCLTHLVNLL (168 aa). The tract at residues 186–273 is disordered; sequence DGPSRMGEES…AKNIASRSAS (88 aa). Positions 223 to 239 are enriched in polar residues; the sequence is GPQSQQRPLDGSQQGRS. Positions 346 to 689 are polymerase/reverse transcriptase domain (RT); sequence EDWGPCTEHG…YLNLYPVARQ (344 aa). Positions 356–599 constitute a Reverse transcriptase domain; the sequence is KHHIRIPRTP…YSLNFMGYVI (244 aa). 3 residues coordinate Mg(2+): D428, D550, and D551.

The protein belongs to the hepadnaviridae P protein family.

It catalyses the reaction DNA(n) + a 2'-deoxyribonucleoside 5'-triphosphate = DNA(n+1) + diphosphate. It carries out the reaction Endonucleolytic cleavage to 5'-phosphomonoester.. Its activity is regulated as follows. Activated by host HSP70 and HSP40 in vitro to be able to bind the epsilon loop of the pgRNA. Because deletion of the RNase H region renders the protein partly chaperone-independent, the chaperones may be needed indirectly to relieve occlusion of the RNA-binding site by this domain. Inhibited by several reverse-transcriptase inhibitors: Lamivudine, Adefovir and Entecavir. Multifunctional enzyme that converts the viral RNA genome into dsDNA in viral cytoplasmic capsids. This enzyme displays a DNA polymerase activity that can copy either DNA or RNA templates, and a ribonuclease H (RNase H) activity that cleaves the RNA strand of RNA-DNA heteroduplexes in a partially processive 3'- to 5'-endonucleasic mode. Neo-synthesized pregenomic RNA (pgRNA) are encapsidated together with the P protein, and reverse-transcribed inside the nucleocapsid. Initiation of reverse-transcription occurs first by binding the epsilon loop on the pgRNA genome, and is initiated by protein priming, thereby the 5'-end of (-)DNA is covalently linked to P protein. Partial (+)DNA is synthesized from the (-)DNA template and generates the relaxed circular DNA (RC-DNA) genome. After budding and infection, the RC-DNA migrates in the nucleus, and is converted into a plasmid-like covalently closed circular DNA (cccDNA). The activity of P protein does not seem to be necessary for cccDNA generation, and is presumably released from (+)DNA by host nuclear DNA repair machinery. The polypeptide is Protein P (Homo sapiens (Human)).